We begin with the raw amino-acid sequence, 119 residues long: Ribosome-binding factor A (119 aa).

This sequence belongs to the RbfA family. In terms of assembly, monomer. Binds 30S ribosomal subunits, but not 50S ribosomal subunits or 70S ribosomes.

Its subcellular location is the cytoplasm. In terms of biological role, one of several proteins that assist in the late maturation steps of the functional core of the 30S ribosomal subunit. Associates with free 30S ribosomal subunits (but not with 30S subunits that are part of 70S ribosomes or polysomes). Required for efficient processing of 16S rRNA. May interact with the 5'-terminal helix region of 16S rRNA. In Buchnera aphidicola subsp. Baizongia pistaciae (strain Bp), this protein is Ribosome-binding factor A.